The primary structure comprises 643 residues: MTDESDNYNDFMMSDEDMDSIEMEDEENDVEGDEGQRGGQEWVQNYEQGLSLWNDENYVAARQVFLKTLSMLVSEEELIEMRCKIHRQVLECWCKILMYGEPDNEQSTEIIADFRNFVELVNELHGKANCSLDLSSMFHHVTMDFMPNIYDRTFIPGITDDEESSKWAKMTFKTTILQILQGSWVCHTFPEVGLLLQQELHVLQAWIKTFDKERDLYAISESLRKDINTLNELQLILQCYIARYIEDQHLLCNEGEVFRMCLNQLDQKCNESLAVAQRSDINLILHFSKALFLILFELDQDDLGDGNKVTGSTCVRRFVTIHKFYQNIECCKEEFWECLKNLEELGTNKFRFERFMQIIVGGFVLCAMIMHRGSQTRLAGTSGNADINPFDYEQLRIAPDHIFVDKLRRIYDVFVGLQIQEMHSCLIELECIRAPLSRLFDQVCYLIQKRKLFSEIAPIYSCISIQDLRQKLQIDPSVPPTRDEILVHLMRYCMQDRGINFKLDLVADTVTFYSEQHSEPLHDAVFSETRMGHKSHKSSISKDRAIVEDIKAAHEMPEVEYAHDIGILESQVDSQSHSKSNTKSMSRHVSGHDPDSFGQDTISFFDTLRLARETYQGSNIDNSVYTIAKLTNEALQEISNDVR.

Acidic residues predominate over residues 1-33; it reads MTDESDNYNDFMMSDEDMDSIEMEDEENDVEGD. Residues 1 to 37 form a disordered region; it reads MTDESDNYNDFMMSDEDMDSIEMEDEENDVEGDEGQR. One can recognise a PCI domain in the interval 331-517; that stretch reads CKEEFWECLK…DTVTFYSEQH (187 aa). Positions 573–584 are enriched in polar residues; it reads DSQSHSKSNTKS. Residues 573-594 form a disordered region; sequence DSQSHSKSNTKSMSRHVSGHDP.

As to quaternary structure, component of a COP9 signalosome-like (CSN) complex.

It is found in the cytoplasm. Its subcellular location is the nucleus. Component of the COP9 signalosome (CSN) complex that acts as an regulator of the ubiquitin (Ubl) conjugation pathway by mediating the deneddylation of the cullin subunit of SCF-type E3 ubiquitin-protein ligase complexes. The CSN complex is involved in the regulation of the mating pheromone response. In Candida glabrata (strain ATCC 2001 / BCRC 20586 / JCM 3761 / NBRC 0622 / NRRL Y-65 / CBS 138) (Yeast), this protein is COP9 signalosome complex subunit 10 (RRI2).